The following is a 267-amino-acid chain: Glutamate racemase (267 aa).

Substrate contacts are provided by residues 13-14 (DS) and 45-46 (YG). Cys-77 functions as the Proton donor/acceptor in the catalytic mechanism. 78–79 (NT) contributes to the substrate binding site. The Proton donor/acceptor role is filled by Cys-192. 193-194 (TH) is a binding site for substrate.

It belongs to the aspartate/glutamate racemases family.

It carries out the reaction L-glutamate = D-glutamate. Its pathway is cell wall biogenesis; peptidoglycan biosynthesis. Its function is as follows. Provides the (R)-glutamate required for cell wall biosynthesis. This Sinorhizobium fredii (strain NBRC 101917 / NGR234) protein is Glutamate racemase.